The primary structure comprises 184 residues: Elongation factor P (184 aa).

The protein belongs to the elongation factor P family.

It localises to the cytoplasm. The protein operates within protein biosynthesis; polypeptide chain elongation. Involved in peptide bond synthesis. Stimulates efficient translation and peptide-bond synthesis on native or reconstituted 70S ribosomes in vitro. Probably functions indirectly by altering the affinity of the ribosome for aminoacyl-tRNA, thus increasing their reactivity as acceptors for peptidyl transferase. This is Elongation factor P from Variovorax paradoxus (strain S110).